Here is a 283-residue protein sequence, read N- to C-terminus: Cyclin-C (283 aa).

In terms of domain architecture, Cyclin N-terminal spans 20 to 151 (DLLKERQKDL…LLELMDCCLI (132 aa)). The tract at residues 252 to 283 (TILSKMPKPKPPPNSEGEQGPNGSQNSSYSQS) is disordered. A compositionally biased stretch (polar residues) spans 272-283 (PNGSQNSSYSQS). A Phosphoserine modification is found at S275.

The protein belongs to the cyclin family. Cyclin C subfamily. Component of the Mediator complex, which is composed of MED1, MED4, MED6, MED7, MED8, MED9, MED10, MED11, MED12, MED13, MED13L, MED14, MED15, MED16, MED17, MED18, MED19, MED20, MED21, MED22, MED23, MED24, MED25, MED26, MED27, MED29, MED30, MED31, CCNC, CDK8 and CDC2L6/CDK11. The MED12, MED13, CCNC and CDK8 subunits form a distinct module termed the CDK8 module. Mediator containing the CDK8 module is less active than Mediator lacking this module in supporting transcriptional activation. Individual preparations of the Mediator complex lacking one or more distinct subunits have been variously termed ARC, CRSP, DRIP, PC2, SMCC and TRAP. The cylin/CDK pair formed by CCNC/CDK8 also associates with the large subunit of RNA polymerase II.

It localises to the nucleus. Component of the Mediator complex, a coactivator involved in regulated gene transcription of nearly all RNA polymerase II-dependent genes. Mediator functions as a bridge to convey information from gene-specific regulatory proteins to the basal RNA polymerase II transcription machinery. Mediator is recruited to promoters by direct interactions with regulatory proteins and serves as a scaffold for the assembly of a functional preinitiation complex with RNA polymerase II and the general transcription factors. Binds to and activates cyclin-dependent kinase CDK8 that phosphorylates the CTD (C-terminal domain) of the large subunit of RNA polymerase II (RNAp II), which may inhibit the formation of a transcription initiation complex. This chain is Cyclin-C (Ccnc), found in Mus musculus (Mouse).